We begin with the raw amino-acid sequence, 286 residues long: Bifunctional protein FolD (286 aa).

NADP(+)-binding positions include 165 to 167 (GRS) and S190.

Belongs to the tetrahydrofolate dehydrogenase/cyclohydrolase family. In terms of assembly, homodimer.

It catalyses the reaction (6R)-5,10-methylene-5,6,7,8-tetrahydrofolate + NADP(+) = (6R)-5,10-methenyltetrahydrofolate + NADPH. The enzyme catalyses (6R)-5,10-methenyltetrahydrofolate + H2O = (6R)-10-formyltetrahydrofolate + H(+). Its pathway is one-carbon metabolism; tetrahydrofolate interconversion. Its function is as follows. Catalyzes the oxidation of 5,10-methylenetetrahydrofolate to 5,10-methenyltetrahydrofolate and then the hydrolysis of 5,10-methenyltetrahydrofolate to 10-formyltetrahydrofolate. This chain is Bifunctional protein FolD, found in Paraburkholderia xenovorans (strain LB400).